The sequence spans 202 residues: Heat shock 22 kDa protein, mitochondrial (202 aa).

The transit peptide at 1–31 (MASSLALKRFLSSGLLSSSFLRPVASSASRS) directs the protein to the mitochondrion. Positions 94 to 202 (VLSAASRRGW…RNNVINVKVD (109 aa)) constitute a sHSP domain.

Belongs to the small heat shock protein (HSP20) family.

It is found in the mitochondrion. The chain is Heat shock 22 kDa protein, mitochondrial (HSP22) from Pisum sativum (Garden pea).